We begin with the raw amino-acid sequence, 368 residues long: MSTKTITVVPGDHVGTEICDEAIKVLKAIEKVSPVKFEFKHHLIGGAAIDATGVPLPDETLEAAKSSDAVLLGAVGGPKWGTGAVRPEQGLLKIRKELNLYANLRPCNFVSDSLLELSPLKSEIVKGTNFTVVRELVGGIYFGERQEQEESSDGQSAWDTEKYSVEEVTRITRMAAFMALQHNPPLPIWSLDKANVLALSRLWRKTVDHVMSTEFPQLKVQHQLIDSAAMILVKSPSQLNGVIITSNMFGDIISDEASVIPGSLGLLPSASLASLPDTNSAFGLYEPCHGSAPDLPANKVNPVATILSVAMMLRLSLDCLKEAEALEKAVGQVLDAGIRTADLRGSSSTKEVGDAVAAAVEKILAEGK.

Position 77–88 (77–88) interacts with NAD(+); it reads GPKWGTGAVRPE. Positions 95, 105, 134, and 226 each coordinate substrate. Residues Asp-226, Asp-251, and Asp-255 each contribute to the Mg(2+) site. 290–301 provides a ligand contact to NAD(+); sequence GSAPDLPANKVN.

This sequence belongs to the isocitrate and isopropylmalate dehydrogenases family. Homodimer. Requires Mg(2+) as cofactor. The cofactor is Mn(2+).

Its subcellular location is the cytoplasm. The catalysed reaction is (2R,3S)-3-isopropylmalate + NAD(+) = 4-methyl-2-oxopentanoate + CO2 + NADH. Its pathway is amino-acid biosynthesis; L-leucine biosynthesis; L-leucine from 3-methyl-2-oxobutanoate: step 3/4. Its function is as follows. Catalyzes the oxidation of 3-carboxy-2-hydroxy-4-methylpentanoate (3-isopropylmalate) to 3-carboxy-4-methyl-2-oxopentanoate. The product decarboxylates to 4-methyl-2 oxopentanoate. The polypeptide is 3-isopropylmalate dehydrogenase (LEU2) (Kodamaea ohmeri (Yeast)).